Consider the following 550-residue polypeptide: Amino acid transporter AVT1C (550 aa).

A compositionally biased stretch (polar residues) spans 1–11 (MNHVPSDQSFY). Disordered regions lie at residues 1-44 (MNHV…ENQA) and 128-148 (QGLL…EKSS). Positions 20–34 (RKDYVEEDGGSHSDS) are enriched in basic and acidic residues. The next 11 membrane-spanning stretches (helical) occupy residues 165–185 (AVLN…PYAA), 190–210 (WLGL…GILL), 237–257 (IFVS…YIIL), 283–303 (LFAL…DLSV), 307–327 (ISAG…WIGL), 342–362 (LSTL…HAVF), 377–397 (AVLL…AVMG), 422–442 (IAVW…ISPV), 462–484 (IGIR…FFGL), 488–510 (LIGS…LSIV), and 521–541 (LCVL…YSAL).

Belongs to the amino acid/polyamine transporter 2 family. Amino acid/auxin permease (AAAP) (TC 2.A.18.5) subfamily.

The protein localises to the membrane. The chain is Amino acid transporter AVT1C from Arabidopsis thaliana (Mouse-ear cress).